We begin with the raw amino-acid sequence, 370 residues long: Pyruvate dehydrogenase E1 component subunit alpha (370 aa).

In terms of assembly, heterodimer of an alpha and a beta chain. It depends on thiamine diphosphate as a cofactor.

The catalysed reaction is N(6)-[(R)-lipoyl]-L-lysyl-[protein] + pyruvate + H(+) = N(6)-[(R)-S(8)-acetyldihydrolipoyl]-L-lysyl-[protein] + CO2. Functionally, the pyruvate dehydrogenase complex catalyzes the overall conversion of pyruvate to acetyl-CoA and CO(2). It contains multiple copies of three enzymatic components: pyruvate dehydrogenase (E1), dihydrolipoamide acetyltransferase (E2) and lipoamide dehydrogenase (E3). This chain is Pyruvate dehydrogenase E1 component subunit alpha (pdhA), found in Staphylococcus aureus (strain COL).